A 358-amino-acid polypeptide reads, in one-letter code: Peptide chain release factor 1 (358 aa).

Q233 bears the N5-methylglutamine mark.

It belongs to the prokaryotic/mitochondrial release factor family. In terms of processing, methylated by PrmC. Methylation increases the termination efficiency of RF1.

Its subcellular location is the cytoplasm. Functionally, peptide chain release factor 1 directs the termination of translation in response to the peptide chain termination codons UAG and UAA. In Clostridium botulinum (strain 657 / Type Ba4), this protein is Peptide chain release factor 1.